A 318-amino-acid polypeptide reads, in one-letter code: L-carnitine dehydrogenase (318 aa).

Glycine 14 to glycine 19 is a binding site for NAD(+).

The protein belongs to the 3-hydroxyacyl-CoA dehydrogenase family. L-carnitine dehydrogenase subfamily. In terms of assembly, homodimer.

It is found in the cytoplasm. It carries out the reaction carnitine + NAD(+) = 3-dehydrocarnitine + NADH + H(+). The protein operates within amine and polyamine metabolism; carnitine metabolism. In terms of biological role, catalyzes the NAD(+)-dependent oxidation of L-carnitine to 3-dehydrocarnitine. This chain is L-carnitine dehydrogenase, found in Streptomyces coelicolor (strain ATCC BAA-471 / A3(2) / M145).